Here is a 431-residue protein sequence, read N- to C-terminus: MNILIKNADIITCNASDDVLQGAFLGIKDGYIDFIDTKEDALKDFKADRIIDAKGKLVMPGLVNAHTHSGMTILRNFANDLALEDWLFGNVLPVEEKLTPEDIYWGTLLGIAEMIKSGTTTFADMYLHMEEVARAVSETGIRANLCRSPLKDSDKSVEDAVRCFEYFKKWDNSFNGRIKVYIEVHSVYLFDEPSLRMSAEVAKEINTGIHIHVQETLKECEDSNKKYGMSPAEICCKTGIFDVPVIAAHCVHLSDGDMGIIRDKGVNVIHNPTSNLKLGSGIAKVDDMLKNGINVALGTDGAASNNNLNMFEEMHLAALIHKGVHMDPTLIGASCALKMATVNGAKALGFGGEIGEISKGMKADLILIDMDKTHLCPVNDPVSAVVYSAQSSDVDTVIIDGNIVMENRELKTIDEEKVKFNVKEIAKRVLR.

Zn(2+)-binding residues include His66 and His68. Substrate is bound by residues Glu95, Arg147, and His185. His212 contributes to the Zn(2+) binding site. 2 residues coordinate substrate: Glu215 and Asp300. A Zn(2+)-binding site is contributed by Asp300.

It belongs to the metallo-dependent hydrolases superfamily. MTA/SAH deaminase family. Zn(2+) is required as a cofactor.

It carries out the reaction S-adenosyl-L-homocysteine + H2O + H(+) = S-inosyl-L-homocysteine + NH4(+). The enzyme catalyses S-methyl-5'-thioadenosine + H2O + H(+) = S-methyl-5'-thioinosine + NH4(+). In terms of biological role, catalyzes the deamination of 5-methylthioadenosine and S-adenosyl-L-homocysteine into 5-methylthioinosine and S-inosyl-L-homocysteine, respectively. Is also able to deaminate adenosine. The chain is 5-methylthioadenosine/S-adenosylhomocysteine deaminase from Acetivibrio thermocellus (strain ATCC 27405 / DSM 1237 / JCM 9322 / NBRC 103400 / NCIMB 10682 / NRRL B-4536 / VPI 7372) (Clostridium thermocellum).